Consider the following 138-residue polypeptide: ATP synthase epsilon chain, chloroplastic (138 aa).

The protein belongs to the ATPase epsilon chain family. As to quaternary structure, F-type ATPases have 2 components, CF(1) - the catalytic core - and CF(0) - the membrane proton channel. CF(1) has five subunits: alpha(3), beta(3), gamma(1), delta(1), epsilon(1). CF(0) has three main subunits: a, b and c.

Its subcellular location is the plastid. The protein localises to the chloroplast thylakoid membrane. Its function is as follows. Produces ATP from ADP in the presence of a proton gradient across the membrane. This Galdieria sulphuraria (Red alga) protein is ATP synthase epsilon chain, chloroplastic.